Consider the following 543-residue polypeptide: CTP synthase (543 aa).

The tract at residues 1–265 (MTRYIFVTGG…DDFVVERFGL (265 aa)) is amidoligase domain. Ser-13 lines the CTP pocket. Ser-13 lines the UTP pocket. Residues 14-19 (SLGKGI) and Asp-71 each bind ATP. 2 residues coordinate Mg(2+): Asp-71 and Glu-139. CTP is bound by residues 146-148 (DIE), 186-191 (KTKPTQ), and Lys-222. Residues 186 to 191 (KTKPTQ) and Lys-222 each bind UTP. Residues 290-541 (TIAMVGKYME…VKAALAQHQK (252 aa)) form the Glutamine amidotransferase type-1 domain. Residue Gly-351 participates in L-glutamine binding. Cys-378 acts as the Nucleophile; for glutamine hydrolysis in catalysis. Residues 379–382 (LGMQ), Glu-402, and Arg-469 contribute to the L-glutamine site. Residues His-514 and Glu-516 contribute to the active site.

Belongs to the CTP synthase family. As to quaternary structure, homotetramer.

The enzyme catalyses UTP + L-glutamine + ATP + H2O = CTP + L-glutamate + ADP + phosphate + 2 H(+). The catalysed reaction is L-glutamine + H2O = L-glutamate + NH4(+). It carries out the reaction UTP + NH4(+) + ATP = CTP + ADP + phosphate + 2 H(+). It functions in the pathway pyrimidine metabolism; CTP biosynthesis via de novo pathway; CTP from UDP: step 2/2. With respect to regulation, allosterically activated by GTP, when glutamine is the substrate; GTP has no effect on the reaction when ammonia is the substrate. The allosteric effector GTP functions by stabilizing the protein conformation that binds the tetrahedral intermediate(s) formed during glutamine hydrolysis. Inhibited by the product CTP, via allosteric rather than competitive inhibition. Functionally, catalyzes the ATP-dependent amination of UTP to CTP with either L-glutamine or ammonia as the source of nitrogen. Regulates intracellular CTP levels through interactions with the four ribonucleotide triphosphates. This Pseudomonas syringae pv. tomato (strain ATCC BAA-871 / DC3000) protein is CTP synthase.